Consider the following 320-residue polypeptide: tRNA N6-adenosine threonylcarbamoyltransferase (320 aa).

Fe cation-binding residues include H114 and H118. Substrate-binding positions include 136–140 (VVSGG), D169, G182, D186, and N273. Position 297 (D297) interacts with Fe cation.

It belongs to the KAE1 / TsaD family. Fe(2+) is required as a cofactor.

The protein resides in the cytoplasm. The enzyme catalyses L-threonylcarbamoyladenylate + adenosine(37) in tRNA = N(6)-L-threonylcarbamoyladenosine(37) in tRNA + AMP + H(+). Functionally, required for the formation of a threonylcarbamoyl group on adenosine at position 37 (t(6)A37) in tRNAs that read codons beginning with adenine. Is involved in the transfer of the threonylcarbamoyl moiety of threonylcarbamoyl-AMP (TC-AMP) to the N6 group of A37, together with TsaE and TsaB. TsaD likely plays a direct catalytic role in this reaction. The polypeptide is tRNA N6-adenosine threonylcarbamoyltransferase (Ureaplasma urealyticum serovar 10 (strain ATCC 33699 / Western)).